Consider the following 205-residue polypeptide: High frequency lysogenization protein HflD homolog (205 aa).

This sequence belongs to the HflD family.

The protein resides in the cytoplasm. It is found in the cell inner membrane. The sequence is that of High frequency lysogenization protein HflD homolog from Alkalilimnicola ehrlichii (strain ATCC BAA-1101 / DSM 17681 / MLHE-1).